Here is a 37-residue protein sequence, read N- to C-terminus: Large ribosomal subunit protein bL36 (37 aa).

It belongs to the bacterial ribosomal protein bL36 family.

The sequence is that of Large ribosomal subunit protein bL36 from Aliivibrio fischeri (strain ATCC 700601 / ES114) (Vibrio fischeri).